The primary structure comprises 635 residues: Leucine-rich repeat and fibronectin type-III domain-containing protein 4 (635 aa).

Residues 1–16 form the signal peptide; the sequence is MAPPLLLLLLASGAAA. Positions 17–48 constitute an LRRNT domain; it reads CPLPCVCQNLSESLSTLCAHRGLLFVPPNVDR. Residues 17–518 are Extracellular-facing; it reads CPLPCVCQNL…LQAHVLGGTL (502 aa). N-linked (GlcNAc...) asparagine glycans are attached at residues N25 and N70. LRR repeat units lie at residues 49-70, 73-94, 97-118, 121-142, 146-161, 170-191, and 194-215; these read RTVELRLADNFIQALGPPDFRN, GLVDLTLSRNAITRIGARAFGD, SLRSLHLDGNRLVELGTGSLRG, NLQHLILSGNQLGRIAPGAFDD, SLEDLDLSYNNLRQVP, ALHTLNLDHNLIDALPPGAFAQ, and QLSRLDLTSNRLATLAPDPLFS. The LRRCT domain occupies 234–280; that stretch reads NPLHCNCELLWLRRLARPDDLETCASPPGLAGRYFWAVPEGEFSCEP. Positions 281-367 constitute an Ig-like domain; sequence PLIARHTQRL…GEATARVELR (87 aa). Residues C302 and C351 are joined by a disulfide bond. N-linked (GlcNAc...) asparagine glycosylation is found at N324, N333, N376, and N440. The interval 373-410 is disordered; it reads HGGNSSAEGGRPGPSDIAASARTAAEGEGTLESEPAVQ. The Fibronectin type-III domain occupies 405–502; sequence SEPAVQVTEV…GCAHFSTLPA (98 aa). Residues 519 to 539 traverse the membrane as a helical segment; sequence TVAVGGVLVAALLVFTVALLV. At 540–635 the chain is on the cytoplasmic side; that stretch reads RGRGAGNGRL…SAERLEESVV (96 aa). The interval 555–583 is disordered; that stretch reads HVQSQTNGGPSPTPKAHPPRSPPPRPQRS. Positions 565 to 580 are enriched in pro residues; that stretch reads SPTPKAHPPRSPPPRP. Residues S585 and S626 each carry the phosphoserine modification. Positions 632 to 635 match the PDZ-binding motif; sequence ESVV.

This sequence belongs to the LRFN family. Can form heteromeric complexes with LRFN1, LRFN2, LRFN3 and LRFN5. Unable to form homophilic interactions across cell junctions. Interacts with DLG1, DLG2, DLG3 and DLG4. In terms of processing, glycosylated.

It localises to the membrane. Its function is as follows. Promotes neurite outgrowth in hippocampal neurons. May play a role in redistributing DLG4 to the cell periphery. This chain is Leucine-rich repeat and fibronectin type-III domain-containing protein 4 (LRFN4), found in Homo sapiens (Human).